The primary structure comprises 91 residues: UPF0250 protein HCH_05838 (91 aa).

Belongs to the UPF0250 family.

In Hahella chejuensis (strain KCTC 2396), this protein is UPF0250 protein HCH_05838.